Here is a 212-residue protein sequence, read N- to C-terminus: ATP synthase subunit 5, mitochondrial (212 aa).

The transit peptide at 1–17 (MFNRVFTRSFASSLRAA) directs the protein to the mitochondrion.

It belongs to the ATPase delta chain family. In terms of assembly, F-type ATPases have 2 components, CF(1) - the catalytic core - and CF(0) - the membrane proton channel. CF(1) has five subunits: alpha(3), beta(3), gamma(1), delta(1), epsilon(1). CF(0) has three main subunits: a, b and c.

It is found in the mitochondrion. The protein localises to the mitochondrion inner membrane. In terms of biological role, mitochondrial membrane ATP synthase (F(1)F(0) ATP synthase or Complex V) produces ATP from ADP in the presence of a proton gradient across the membrane which is generated by electron transport complexes of the respiratory chain. F-type ATPases consist of two structural domains, F(1) - containing the extramembraneous catalytic core and F(0) - containing the membrane proton channel, linked together by a central stalk and a peripheral stalk. During catalysis, ATP synthesis in the catalytic domain of F(1) is coupled via a rotary mechanism of the central stalk subunits to proton translocation. Part of the complex F(0) domain and the peripheric stalk, which acts as a stator to hold the catalytic alpha(3)beta(3) subcomplex and subunit a/ATP6 static relative to the rotary elements. This Saccharomyces cerevisiae (strain ATCC 204508 / S288c) (Baker's yeast) protein is ATP synthase subunit 5, mitochondrial (ATP5).